The chain runs to 336 residues: Protein-glutamate methylesterase/protein-glutamine glutaminase 3 (336 aa).

Residues lysine 2–leucine 119 enclose the Response regulatory domain. 4-aspartylphosphate is present on aspartate 53. A CheB-type methylesterase domain is found at valine 147 to glutamine 336. Catalysis depends on residues serine 159, histidine 186, and aspartate 279.

Belongs to the CheB family. In terms of processing, phosphorylated by CheA. Phosphorylation of the N-terminal regulatory domain activates the methylesterase activity.

The protein localises to the cytoplasm. It catalyses the reaction [protein]-L-glutamate 5-O-methyl ester + H2O = L-glutamyl-[protein] + methanol + H(+). The catalysed reaction is L-glutaminyl-[protein] + H2O = L-glutamyl-[protein] + NH4(+). Involved in chemotaxis. Part of a chemotaxis signal transduction system that modulates chemotaxis in response to various stimuli. Catalyzes the demethylation of specific methylglutamate residues introduced into the chemoreceptors (methyl-accepting chemotaxis proteins or MCP) by CheR. Also mediates the irreversible deamidation of specific glutamine residues to glutamic acid. This chain is Protein-glutamate methylesterase/protein-glutamine glutaminase 3, found in Pseudomonas syringae pv. tomato (strain ATCC BAA-871 / DC3000).